The primary structure comprises 247 residues: Carboxy-S-adenosyl-L-methionine synthase (247 aa).

S-adenosyl-L-methionine contacts are provided by residues tyrosine 39, 64–66 (GCS), 89–90 (DN), 117–118 (DI), asparagine 132, and arginine 199.

It belongs to the class I-like SAM-binding methyltransferase superfamily. Cx-SAM synthase family. Homodimer.

The catalysed reaction is prephenate + S-adenosyl-L-methionine = carboxy-S-adenosyl-L-methionine + 3-phenylpyruvate + H2O. In terms of biological role, catalyzes the conversion of S-adenosyl-L-methionine (SAM) to carboxy-S-adenosyl-L-methionine (Cx-SAM). The polypeptide is Carboxy-S-adenosyl-L-methionine synthase (Salmonella paratyphi B (strain ATCC BAA-1250 / SPB7)).